We begin with the raw amino-acid sequence, 70 residues long: Non-histone chromosomal protein H6 (70 aa).

The tract at residues 1–70 (MPKRKSATKG…AAGDGAGNAK (70 aa)) is disordered. Over residues 30 to 45 (AKPKKAAAPKKAVKGK) the composition is skewed to basic residues. Residues 46-57 (KAAENGDAKAEA) are compositionally biased toward basic and acidic residues.

The protein belongs to the HMGN family.

The protein localises to the nucleus. It is found in the secreted. In terms of biological role, non-histone protein that probably binds to the inner side of nucleosomal DNA, altering the association between the DNA and the nucleosome octamer. Functionally, oncorhyncin III has antibacterial activity against Gram-positive and Gram-negative bacteria at submicromolar concentrations. The chain is Non-histone chromosomal protein H6 from Oncorhynchus mykiss (Rainbow trout).